A 94-amino-acid chain; its full sequence is Co-chaperonin GroES (94 aa).

Belongs to the GroES chaperonin family. Heptamer of 7 subunits arranged in a ring. Interacts with the chaperonin GroEL.

The protein localises to the cytoplasm. Functionally, together with the chaperonin GroEL, plays an essential role in assisting protein folding. The GroEL-GroES system forms a nano-cage that allows encapsulation of the non-native substrate proteins and provides a physical environment optimized to promote and accelerate protein folding. GroES binds to the apical surface of the GroEL ring, thereby capping the opening of the GroEL channel. The protein is Co-chaperonin GroES of Ehrlichia ruminantium (strain Gardel).